The primary structure comprises 313 residues: MTKGSKYTIDPISVKTACTSEESYIRCVEYGKGKAHYPNLSLLAKAILAGVFVGVCAHASGIAGGHFYYHKLREHVGISMSAFVYGFTFPIAFLCIIATGSDLFTGNTLAVTTALLQRKVTLLEYLRVMSISLFGNYVGAVSFAFFVSHLSGAFKKHEEIGKNHIFQFLNDIAEKKVSHTFVQCVCLAIGCNIFVCLAVYFVLTIKDGSGMVFSVFFAVYAFAIAGYEHIIANMYTLNLALMIEANVDWTKVYVDNLLPTLIGNYIAGAIVLACPLFYIYRHSYSDYEKTRGDGGNSGLKSLSIEMQNGSSGR.

Over 1-46 (MTKGSKYTIDPISVKTACTSEESYIRCVEYGKGKAHYPNLSLLAKA) the chain is Cytoplasmic. A helical membrane pass occupies residues 47 to 67 (ILAGVFVGVCAHASGIAGGHF). Residues 68–77 (YYHKLREHVG) lie on the Extracellular side of the membrane. The helical transmembrane segment at 78–98 (ISMSAFVYGFTFPIAFLCIIA) threads the bilayer. The Cytoplasmic segment spans residues 99–127 (TGSDLFTGNTLAVTTALLQRKVTLLEYLR). The helical transmembrane segment at 128 to 148 (VMSISLFGNYVGAVSFAFFVS) threads the bilayer. Residues 149–184 (HLSGAFKKHEEIGKNHIFQFLNDIAEKKVSHTFVQC) are Extracellular-facing. The helical transmembrane segment at 185–205 (VCLAIGCNIFVCLAVYFVLTI) threads the bilayer. The Cytoplasmic segment spans residues 206 to 210 (KDGSG). The helical transmembrane segment at 211-231 (MVFSVFFAVYAFAIAGYEHII) threads the bilayer. The Extracellular segment spans residues 232–256 (ANMYTLNLALMIEANVDWTKVYVDN). Residues 257-277 (LLPTLIGNYIAGAIVLACPLF) form a helical membrane-spanning segment. Residues 278-313 (YIYRHSYSDYEKTRGDGGNSGLKSLSIEMQNGSSGR) are Cytoplasmic-facing. The segment at 290–313 (TRGDGGNSGLKSLSIEMQNGSSGR) is disordered. Polar residues predominate over residues 298-313 (GLKSLSIEMQNGSSGR).

Belongs to the FNT transporter (TC 1.A.16) family. In terms of assembly, homopentamer.

The protein localises to the cell membrane. Its subcellular location is the vacuole membrane. The enzyme catalyses (S)-lactate(in) + H(+)(in) = (S)-lactate(out) + H(+)(out). It catalyses the reaction formate(in) + H(+)(in) = formate(out) + H(+)(out). It carries out the reaction pyruvate(out) + H(+)(out) = pyruvate(in) + H(+)(in). The catalysed reaction is acetate(out) + H(+)(out) = acetate(in) + H(+)(in). Inhibited by the Malaria Box compound MMV007839 and its derivatives BH296 and BH267.meta. Monocarboxylate-proton symporter that mediates the efflux of the waste product lactate in the intraerythrocytic parasites; active in acidic-to-neutral pH range. Transports L-lactate. The polypeptide is Formate-nitrite transporter (Plasmodium vivax).